The sequence spans 602 residues: MQKSYGVALESPTGSGKTIMALKSALQYSSERKLKVLYLVRTNSQEEQVIKELRSLSSTMKIRAIPMQGRVNMCILYRMVDDLHEINAESLAKFCNMKKREVMAGNEAACPYFNFKIRSDETKRFLFDELPTAEEFYDYGERNNVCPYESMKAALPDADIVIAPYAYFLNRSVAEKFLSHWGVSRNQIVIILDEAHNLPDIGRSIGSFRISVESLNRADREAQAYGDPELSQKIHVSDLIEMIRSALQSMVSERCGKGDVRIRFQEFMEYMRIMNKRSEREIRSLLNYLYLFGEYVENEKEKVGKVPFSYCSSVASRIIAFSDQDEEKYAAILSPEDGGYMQAACLDPSGILEVLKESKTIHMSGTLDPFDFYSDITGFEIPFKKIGEIFPPENRYIAYYDGVSSKYDTLDEKELDRMATVIEDIILKVKKNTIVYFPSYSLMDRVENRVSFEHMKEYRGIDQKELYSMLKKFRRDHGTIFAVSGGRLSEGINFPGNELEMIILAGLPFPRPDAINRSLFDYYERKYGKGWEYSVVYPTAIKIRQEIGRLIRSAEDTGACVILDKRAGQFRKFIPDMKKTSDPASDIYNFFISAQAREKYGA.

One can recognise a Helicase ATP-binding domain in the interval 1–247 (MQKSYGVALE…DLIEMIRSAL (247 aa)). 11 to 18 (SPTGSGKT) contacts ATP. Positions 74, 95, 110, and 146 each coordinate [4Fe-4S] cluster. The DEAH box motif lies at 193–196 (DEAH). The Helicase C-terminal domain occupies 421 to 602 (VIEDIILKVK…SAQAREKYGA (182 aa)). Tryptophan 531 and arginine 566 together coordinate ssDNA.

The protein belongs to the helicase family. RAD3/XPD subfamily. In terms of assembly, monomer. [4Fe-4S] cluster is required as a cofactor.

It carries out the reaction Couples ATP hydrolysis with the unwinding of duplex DNA at the replication fork by translocating in the 5'-3' direction. This creates two antiparallel DNA single strands (ssDNA). The leading ssDNA polymer is the template for DNA polymerase III holoenzyme which synthesizes a continuous strand.. The catalysed reaction is ATP + H2O = ADP + phosphate + H(+). ATP-dependent 5'-3' DNA helicase. Thought to be involved in nucleotide excision repair (NER) of DNA. The sequence is that of ATP-dependent DNA helicase XPD from Thermoplasma acidophilum (strain ATCC 25905 / DSM 1728 / JCM 9062 / NBRC 15155 / AMRC-C165).